A 511-amino-acid chain; its full sequence is 60 kDa neurofilament protein (511 aa).

A disordered region spans residues 1–32; the sequence is MSVTQKKTEISTTTTYEGESRPSSGMSGFSYS. The head stretch occupies residues 1–99; the sequence is MSVTQKKTEI…KANREREKQD (99 aa). Residues 21–30 show a composition bias toward polar residues; that stretch reads RPSSGMSGFS. Positions 96–449 constitute an IF rod domain; the sequence is EKQDMRDLNE…KLLEGEESRV (354 aa). Residues 100 to 135 form a coil 1A region; that stretch reads MRDLNERFANYIEKVRFLEAQNKKLAGELEELKSKW. The linker 1 stretch occupies residues 136 to 145; the sequence is GKETSAIKEM. A coil 1B region spans residues 146–284; the sequence is YETELEEARK…VHAQELKELA (139 aa). Positions 285–303 are linker 12; that stretch reads ALAYRDTTAENREFWRNEL. The coil 2 stretch occupies residues 304–449; sequence AQAIRDIQQE…KLLEGEESRV (146 aa). Residues 450 to 511 form a tail region; that stretch reads GMKQIVEQVV…EEKKSMGSSD (62 aa). The interval 479–511 is disordered; sequence GYEATGGITTTTTTSSQERRSMSEEKKSMGSSD. Residues 483–492 are compositionally biased toward low complexity; it reads TGGITTTTTT. Basic and acidic residues predominate over residues 495 to 511; it reads QERRSMSEEKKSMGSSD.

Belongs to the intermediate filament family.

In terms of biological role, major squid neurofilament protein. The polypeptide is 60 kDa neurofilament protein (Doryteuthis pealeii (Longfin inshore squid)).